We begin with the raw amino-acid sequence, 468 residues long: ATP synthase subunit beta (468 aa).

ATP is bound at residue 155–162; sequence GGAGVGKT.

The protein belongs to the ATPase alpha/beta chains family. As to quaternary structure, F-type ATPases have 2 components, CF(1) - the catalytic core - and CF(0) - the membrane proton channel. CF(1) has five subunits: alpha(3), beta(3), gamma(1), delta(1), epsilon(1). CF(0) has three main subunits: a(1), b(2) and c(9-12). The alpha and beta chains form an alternating ring which encloses part of the gamma chain. CF(1) is attached to CF(0) by a central stalk formed by the gamma and epsilon chains, while a peripheral stalk is formed by the delta and b chains.

The protein resides in the cell inner membrane. It catalyses the reaction ATP + H2O + 4 H(+)(in) = ADP + phosphate + 5 H(+)(out). Functionally, produces ATP from ADP in the presence of a proton gradient across the membrane. The catalytic sites are hosted primarily by the beta subunits. This Thermotoga petrophila (strain ATCC BAA-488 / DSM 13995 / JCM 10881 / RKU-1) protein is ATP synthase subunit beta.